A 307-amino-acid chain; its full sequence is Nodulation protein NoeC (307 aa).

Helical transmembrane passes span 46–66 (APLW…YVLN), 91–111 (SGLT…VCAI), 117–137 (LFAI…KVRG), 140–160 (VLDL…GATA), 163–183 (IPVP…LASI), 212–232 (IVAL…ELFV), 238–258 (AQGP…AYWI), and 279–299 (VTDG…VFLM).

It localises to the cell membrane. In Azorhizobium caulinodans (strain ATCC 43989 / DSM 5975 / JCM 20966 / LMG 6465 / NBRC 14845 / NCIMB 13405 / ORS 571), this protein is Nodulation protein NoeC (noeC).